Reading from the N-terminus, the 675-residue chain is Methionine--tRNA ligase (675 aa).

The 'HIGH' region motif lies at 15-25 (PYANGPIHLGH). C146, C149, C159, and C162 together coordinate Zn(2+). The short motif at 332–336 (KMSKS) is the 'KMSKS' region element. K335 is a binding site for ATP. Residues 573 to 675 (DFAKVDMRVA…SGAQPGMQVK (103 aa)) form the tRNA-binding domain.

It belongs to the class-I aminoacyl-tRNA synthetase family. MetG type 1 subfamily. In terms of assembly, homodimer. Zn(2+) serves as cofactor.

The protein resides in the cytoplasm. The catalysed reaction is tRNA(Met) + L-methionine + ATP = L-methionyl-tRNA(Met) + AMP + diphosphate. In terms of biological role, is required not only for elongation of protein synthesis but also for the initiation of all mRNA translation through initiator tRNA(fMet) aminoacylation. This chain is Methionine--tRNA ligase, found in Photorhabdus laumondii subsp. laumondii (strain DSM 15139 / CIP 105565 / TT01) (Photorhabdus luminescens subsp. laumondii).